The following is a 212-amino-acid chain: MPDNCHFVRSVDLLSVILLRLSTEVGLTLTTLPRHSKELILYHCTYEEHAVELSKPGLRKAGGKCSLFVDPEERENSPSPPIPPYQISEMPLHELLESGNAKLVPNPEFDLTDPDDFHKCFSVTYSALSLMVPYLPRAALKAARVFCKDHSILTTDMLDLNYLEELIEFSKETVNKIPARIPIEDMLLERGYVLPWVHGGTVKGGKLLTPND.

In terms of biological role, plasmid partition require REP1, REP2, and a cis-acting DNA sequence (known as STB). This Kluyveromyces lactis (Yeast) protein is Trans-acting factor C (C).